The following is a 526-amino-acid chain: Phosphoenolpyruvate carboxylase (526 aa).

The protein belongs to the PEPCase type 2 family. Homotetramer. It depends on Mg(2+) as a cofactor.

It catalyses the reaction oxaloacetate + phosphate = phosphoenolpyruvate + hydrogencarbonate. Catalyzes the irreversible beta-carboxylation of phosphoenolpyruvate (PEP) to form oxaloacetate (OAA), a four-carbon dicarboxylic acid source for the tricarboxylic acid cycle. The sequence is that of Phosphoenolpyruvate carboxylase from Methanosarcina acetivorans (strain ATCC 35395 / DSM 2834 / JCM 12185 / C2A).